The chain runs to 609 residues: ATP-dependent lipid A-core flippase (609 aa).

The next 6 membrane-spanning stretches (helical) occupy residues 47 to 67 (LLAA…IYLI), 88 to 108 (ILML…VGSF), 167 to 187 (AIIT…VMFV), 190 to 210 (WQLS…ISII), 279 to 299 (VIQI…AIFG), and 305 to 325 (GSSW…AAIL). The region spanning 47–340 (LLAAIGSIFF…LTKVNVVIQK (294 aa)) is the ABC transmembrane type-1 domain. The 235-residue stretch at 372–606 (VTIKDLSFAF…GGLYTRLYQS (235 aa)) folds into the ABC transporter domain. 404-411 (GKSGSGKT) serves as a coordination point for ATP.

The protein belongs to the ABC transporter superfamily. Lipid exporter (TC 3.A.1.106) family. In terms of assembly, homodimer.

It is found in the cell inner membrane. It catalyses the reaction ATP + H2O + lipid A-core oligosaccharideSide 1 = ADP + phosphate + lipid A-core oligosaccharideSide 2.. In terms of biological role, involved in lipopolysaccharide (LPS) biosynthesis. Translocates lipid A-core from the inner to the outer leaflet of the inner membrane. Transmembrane domains (TMD) form a pore in the inner membrane and the ATP-binding domain (NBD) is responsible for energy generation. This is ATP-dependent lipid A-core flippase from Francisella tularensis subsp. tularensis (strain FSC 198).